The primary structure comprises 174 residues: Mitochondrial holo-[acyl-carrier-protein] synthase (174 aa).

Belongs to the P-Pant transferase superfamily. AcpS family.

The protein localises to the mitochondrion. It carries out the reaction apo-[ACP] + CoA = holo-[ACP] + adenosine 3',5'-bisphosphate + H(+). In terms of biological role, transfers the 4'-phosphopantetheine moiety from coenzyme A to a Ser of mitochondrial acyl-carrier-protein. The protein is Mitochondrial holo-[acyl-carrier-protein] synthase (PPT2) of Eremothecium gossypii (strain ATCC 10895 / CBS 109.51 / FGSC 9923 / NRRL Y-1056) (Yeast).